A 254-amino-acid chain; its full sequence is 3-deoxy-manno-octulosonate cytidylyltransferase (254 aa).

This sequence belongs to the KdsB family.

The protein localises to the cytoplasm. It catalyses the reaction 3-deoxy-alpha-D-manno-oct-2-ulosonate + CTP = CMP-3-deoxy-beta-D-manno-octulosonate + diphosphate. It functions in the pathway nucleotide-sugar biosynthesis; CMP-3-deoxy-D-manno-octulosonate biosynthesis; CMP-3-deoxy-D-manno-octulosonate from 3-deoxy-D-manno-octulosonate and CTP: step 1/1. It participates in bacterial outer membrane biogenesis; lipopolysaccharide biosynthesis. Activates KDO (a required 8-carbon sugar) for incorporation into bacterial lipopolysaccharide in Gram-negative bacteria. This Pseudomonas putida (strain W619) protein is 3-deoxy-manno-octulosonate cytidylyltransferase.